A 261-amino-acid polypeptide reads, in one-letter code: MGHEQNQGAALLQMLPLLWLLPHSWAVPEAPTPMWPDDLQNHTFLHTVYCQDGSPSVGLSEAYDEDQLFFFDFSQNTRVPRLPEFADWAQEQGDAPAILFDKEFCEWMIQQIGPKLDGKIPVSRGFPIAEVFTLKPLEFGKPNTLVCFVSNLFPPMLTVNWQHHSVPVEGFGPTFVSAVDGLSFQAFSYLNFTPEPSDIFSCIVTHEIDRYTAIAYWVPRNALPSDLLENVLCGVAFGLGVLGIIVGIVLIIYFRKPCSGD.

The first 26 residues, 1-26 (MGHEQNQGAALLQMLPLLWLLPHSWA), serve as a signal peptide directing secretion. The interval 27–124 (VPEAPTPMWP…KLDGKIPVSR (98 aa)) is alpha-1. Residues 27 to 233 (VPEAPTPMWP…PSDLLENVLC (207 aa)) lie on the Lumenal side of the membrane. Asn-41 carries N-linked (GlcNAc...) asparagine glycosylation. Intrachain disulfides connect Cys-50–Cys-105 and Cys-147–Cys-202. In terms of domain architecture, Ig-like C1-type spans 121-215 (PVSRGFPIAE…HEIDRYTAIA (95 aa)). The segment at 125 to 217 (GFPIAEVFTL…IDRYTAIAYW (93 aa)) is alpha-2. The segment at 218-233 (VPRNALPSDLLENVLC) is connecting peptide. A helical membrane pass occupies residues 234–254 (GVAFGLGVLGIIVGIVLIIYF). The Cytoplasmic portion of the chain corresponds to 255–261 (RKPCSGD).

The protein belongs to the MHC class II family. In terms of assembly, heterodimer of an alpha chain (DMA) and a beta chain (DMB). Interacts with MHCII; this interaction mediates rapid selection of high-affinity peptides in a pH-dependent manner, with an optimum at pH 5.5.

The protein localises to the late endosome membrane. It localises to the lysosome membrane. Functionally, plays a critical role in catalyzing the release of class II-associated invariant chain peptide (CLIP) from newly synthesized MHC class II molecules and freeing the peptide binding site for acquisition of antigenic peptides. In B-cells, the interaction between HLA-DM and MHC class II molecules is regulated by HLA-DO. The protein is HLA class II histocompatibility antigen, DM alpha chain (HLA-DMA) of Homo sapiens (Human).